The following is a 212-amino-acid chain: ATP-dependent Clp protease proteolytic subunit (212 aa).

Serine 112 (nucleophile) is an active-site residue. Histidine 137 is an active-site residue.

Belongs to the peptidase S14 family. In terms of assembly, fourteen ClpP subunits assemble into 2 heptameric rings which stack back to back to give a disk-like structure with a central cavity, resembling the structure of eukaryotic proteasomes.

It is found in the cytoplasm. The enzyme catalyses Hydrolysis of proteins to small peptides in the presence of ATP and magnesium. alpha-casein is the usual test substrate. In the absence of ATP, only oligopeptides shorter than five residues are hydrolyzed (such as succinyl-Leu-Tyr-|-NHMec, and Leu-Tyr-Leu-|-Tyr-Trp, in which cleavage of the -Tyr-|-Leu- and -Tyr-|-Trp bonds also occurs).. Cleaves peptides in various proteins in a process that requires ATP hydrolysis. Has a chymotrypsin-like activity. Plays a major role in the degradation of misfolded proteins. This chain is ATP-dependent Clp protease proteolytic subunit, found in Thiobacillus denitrificans (strain ATCC 25259 / T1).